Consider the following 413-residue polypeptide: MSTLQSKDPKVFEAVQQELGRQRDKIELIASENFVSEAVMEAQSSVLTNKYAEGYPGRRYYGGCEYVDIVEDLARDRAKEIFGGEHVNVQPHSGAQANMAVYFTILEHGDTVLGMNLSHGGHLTHGSPVNFSGIQYNFVEYGVDKESQRIDYEEVRRLAKEHQPKMIVAGASAYPREIDFAKFREIADEVGAYLMVDMAHIAGLVAAGLHQNPVPHSHFVTTTTHKTLRGPRGGMIICNEEFAKQIDKSIFPGIQGGPLMHVIAAKAVAFGEALQPEFKSYGEAIIRNAKRLGEKLTSEGIDLVSGGTDNHLLLLDLRSLGLTGKVAEKALDDVGITTNKNTIPFDPESPFVTSGIRIGTAAVTSRGLDEEAMDEIGATIALTLKNVDNEEKMNEARERVDALTAKFPMYPNL.

(6S)-5,6,7,8-tetrahydrofolate is bound by residues Leu117 and 121-123; that span reads GHL. An N6-(pyridoxal phosphate)lysine modification is found at Lys226. (6S)-5,6,7,8-tetrahydrofolate is bound by residues Glu241 and 349 to 351; that span reads SPF.

It belongs to the SHMT family. As to quaternary structure, homodimer. Pyridoxal 5'-phosphate is required as a cofactor.

It localises to the cytoplasm. The catalysed reaction is (6R)-5,10-methylene-5,6,7,8-tetrahydrofolate + glycine + H2O = (6S)-5,6,7,8-tetrahydrofolate + L-serine. It functions in the pathway one-carbon metabolism; tetrahydrofolate interconversion. The protein operates within amino-acid biosynthesis; glycine biosynthesis; glycine from L-serine: step 1/1. Functionally, catalyzes the reversible interconversion of serine and glycine with tetrahydrofolate (THF) serving as the one-carbon carrier. This reaction serves as the major source of one-carbon groups required for the biosynthesis of purines, thymidylate, methionine, and other important biomolecules. Also exhibits THF-independent aldolase activity toward beta-hydroxyamino acids, producing glycine and aldehydes, via a retro-aldol mechanism. In Halalkalibacterium halodurans (strain ATCC BAA-125 / DSM 18197 / FERM 7344 / JCM 9153 / C-125) (Bacillus halodurans), this protein is Serine hydroxymethyltransferase.